A 400-amino-acid polypeptide reads, in one-letter code: Spaetzle-processing enzyme (400 aa).

Positions 1–27 (MASTERNFLLLSLVVSALSGLVHRSDA) are cleaved as a signal peptide. Residues 34–94 (SCTPQQSDER…GLVNRILVCC (61 aa)) enclose the Clip domain. 6 cysteine pairs are disulfide-bonded: Cys35/Cys93, Cys46/Cys77, Cys52/Cys94, Cys127/Cys269, Cys166/Cys182, and Cys211/Cys221. Positions 135–399 (IFGGTNTTLW…FIDWIKQKLE (265 aa)) constitute a Peptidase S1 domain. Residue Asn140 is glycosylated (N-linked (GlcNAc...) asparagine). The active-site Charge relay system is His181. 4 residues coordinate Ca(2+): Glu202, Asp204, Thr207, and Asp210. The Charge relay system role is filled by Asp249. Asn311 carries N-linked (GlcNAc...) asparagine glycosylation. Intrachain disulfides connect Cys315-Cys332 and Cys342-Cys375. Ser346 functions as the Charge relay system in the catalytic mechanism.

This sequence belongs to the peptidase S1 family. CLIP subfamily. In terms of assembly, in the active form, heterodimer of a light chain and a heavy chain; disulfide-linked. In terms of processing, proteolytically cleaved in response to Gram-negative bacterial or fungal infection; processing is likely to result in its activation. Cleavage produces a light chain containing the CLIP domain and a catalytic heavy chain which remain covalently associated through an interchain disulfide bond.

The protein localises to the secreted. In terms of biological role, endopeptidase which plays a key role in innate immunity by cleaving Tl ligand spz and thereby activating the Toll pathway in response to fungal and Gram-positive bacterial infections. Acts downstream of pathogen recognition receptors PGRP-SA and GNBP1 and protease grass in response to Gram-positive bacterial infection. Acts downstream of protease psh in response to fungal infection. This chain is Spaetzle-processing enzyme, found in Drosophila melanogaster (Fruit fly).